A 344-amino-acid chain; its full sequence is L-threonine 3-dehydrogenase (344 aa).

Zn(2+) is bound at residue cysteine 42. Active-site charge relay system residues include threonine 44 and histidine 47. Zn(2+) is bound by residues histidine 67, glutamate 68, cysteine 97, cysteine 100, cysteine 103, and cysteine 111. NAD(+)-binding positions include isoleucine 179, aspartate 199, arginine 204, 266–268 (LGI), and 290–291 (IY).

Belongs to the zinc-containing alcohol dehydrogenase family. Homotetramer. Zn(2+) serves as cofactor.

It is found in the cytoplasm. The catalysed reaction is L-threonine + NAD(+) = (2S)-2-amino-3-oxobutanoate + NADH + H(+). It functions in the pathway amino-acid degradation; L-threonine degradation via oxydo-reductase pathway; glycine from L-threonine: step 1/2. Catalyzes the NAD(+)-dependent oxidation of L-threonine to 2-amino-3-ketobutyrate. The polypeptide is L-threonine 3-dehydrogenase (Mesorhizobium japonicum (strain LMG 29417 / CECT 9101 / MAFF 303099) (Mesorhizobium loti (strain MAFF 303099))).